A 373-amino-acid chain; its full sequence is UDP-N-acetylglucosamine--N-acetylmuramyl-(pentapeptide) pyrophosphoryl-undecaprenol N-acetylglucosamine transferase (373 aa).

Residues threonine 14–glycine 16, asparagine 128, arginine 165, serine 199, and glutamine 295 contribute to the UDP-N-acetyl-alpha-D-glucosamine site.

It belongs to the glycosyltransferase 28 family. MurG subfamily.

The protein resides in the cell membrane. It carries out the reaction di-trans,octa-cis-undecaprenyl diphospho-N-acetyl-alpha-D-muramoyl-L-alanyl-D-glutamyl-meso-2,6-diaminopimeloyl-D-alanyl-D-alanine + UDP-N-acetyl-alpha-D-glucosamine = di-trans,octa-cis-undecaprenyl diphospho-[N-acetyl-alpha-D-glucosaminyl-(1-&gt;4)]-N-acetyl-alpha-D-muramoyl-L-alanyl-D-glutamyl-meso-2,6-diaminopimeloyl-D-alanyl-D-alanine + UDP + H(+). The protein operates within cell wall biogenesis; peptidoglycan biosynthesis. Its function is as follows. Cell wall formation. Catalyzes the transfer of a GlcNAc subunit on undecaprenyl-pyrophosphoryl-MurNAc-pentapeptide (lipid intermediate I) to form undecaprenyl-pyrophosphoryl-MurNAc-(pentapeptide)GlcNAc (lipid intermediate II). This Mycobacterium sp. (strain KMS) protein is UDP-N-acetylglucosamine--N-acetylmuramyl-(pentapeptide) pyrophosphoryl-undecaprenol N-acetylglucosamine transferase.